We begin with the raw amino-acid sequence, 214 residues long: MSSMVTPQHAQELSTGARELGIDLSPAQHEQLLAYLALLIKWNKAYNLTAVRNPDEMVSRHLLDSLSVVPFIEGTRWIDVGSGGGMPGIPMAILFPERKVALLDSNGKKTRFQTQVKLELKLDNLEVIHSRAESYQPEVPFDGIISRAFSSLEDFTGWTRHMGDVNTRWLAMKGLHPDDELVALPSDFHLDSAHALTVPGCQGQRHLLILRRTA.

S-adenosyl-L-methionine is bound by residues Gly81, Met86, 132–133 (AE), and Arg147.

The protein belongs to the methyltransferase superfamily. RNA methyltransferase RsmG family.

It is found in the cytoplasm. It carries out the reaction guanosine(527) in 16S rRNA + S-adenosyl-L-methionine = N(7)-methylguanosine(527) in 16S rRNA + S-adenosyl-L-homocysteine. Specifically methylates the N7 position of guanine in position 527 of 16S rRNA. The sequence is that of Ribosomal RNA small subunit methyltransferase G from Pseudomonas syringae pv. syringae (strain B728a).